Here is a 161-residue protein sequence, read N- to C-terminus: Lipoprotein signal peptidase (161 aa).

Transmembrane regions (helical) follow at residues 9–29 (ISLL…WLIT), 63–83 (KMLF…IFYI), and 88–108 (FNLF…GNFI). Active-site residues include Asp-118 and Asp-136. A helical transmembrane segment spans residues 131–151 (IFNIADSSLTIGVIFVIIALI).

It belongs to the peptidase A8 family.

It localises to the cell membrane. The enzyme catalyses Release of signal peptides from bacterial membrane prolipoproteins. Hydrolyzes -Xaa-Yaa-Zaa-|-(S,diacylglyceryl)Cys-, in which Xaa is hydrophobic (preferably Leu), and Yaa (Ala or Ser) and Zaa (Gly or Ala) have small, neutral side chains.. Its pathway is protein modification; lipoprotein biosynthesis (signal peptide cleavage). Functionally, this protein specifically catalyzes the removal of signal peptides from prolipoproteins. This is Lipoprotein signal peptidase from Staphylococcus epidermidis (strain ATCC 12228 / FDA PCI 1200).